A 329-amino-acid polypeptide reads, in one-letter code: Gut-specific cysteine proteinase (329 aa).

Residues 1–15 (MKFLILTALCAVTLA) form the signal peptide. The propeptide at 16 to 84 (FVPINHQSAV…ATEQEVVLAS (69 aa)) is activation peptide. 6 disulfides stabilise this stretch: cysteine 98/cysteine 127, cysteine 110/cysteine 155, cysteine 146/cysteine 204, cysteine 147/cysteine 151, cysteine 183/cysteine 208, and cysteine 191/cysteine 196. The active site involves cysteine 113. Residues histidine 275 and asparagine 295 contribute to the active site.

Belongs to the peptidase C1 family. As to expression, larvae exhibit strong expression in gut cells and weak expression in hypodermal cells. Adults exhibit the reverse: strong expression in hypodermal cells and weaker expression in gut cells.

Its function is as follows. Thiol protease. Has a role as a digestive enzyme. This chain is Gut-specific cysteine proteinase (cpr-1), found in Caenorhabditis elegans.